The chain runs to 283 residues: Pantothenate synthetase (283 aa).

Met-33–His-40 is a binding site for ATP. The Proton donor role is filled by His-40. Gln-64 serves as a coordination point for (R)-pantoate. A beta-alanine-binding site is contributed by Gln-64. ATP is bound at residue Gly-150–Asp-153. Gln-156 contacts (R)-pantoate. Residues Ile-179 and Met-187–Arg-190 contribute to the ATP site.

It belongs to the pantothenate synthetase family. In terms of assembly, homodimer.

It localises to the cytoplasm. It catalyses the reaction (R)-pantoate + beta-alanine + ATP = (R)-pantothenate + AMP + diphosphate + H(+). Its pathway is cofactor biosynthesis; (R)-pantothenate biosynthesis; (R)-pantothenate from (R)-pantoate and beta-alanine: step 1/1. Its function is as follows. Catalyzes the condensation of pantoate with beta-alanine in an ATP-dependent reaction via a pantoyl-adenylate intermediate. In Mesorhizobium japonicum (strain LMG 29417 / CECT 9101 / MAFF 303099) (Mesorhizobium loti (strain MAFF 303099)), this protein is Pantothenate synthetase.